The primary structure comprises 256 residues: Type III pantothenate kinase 1 (256 aa).

Aspartate 6 to phenylalanine 13 is a binding site for ATP. Glycine 107–arginine 110 contacts substrate. Residue aspartate 109 is the Proton acceptor of the active site. Aspartate 130 contributes to the K(+) binding site. Position 133 (threonine 133) interacts with ATP. Residue threonine 185 coordinates substrate.

This sequence belongs to the type III pantothenate kinase family. In terms of assembly, homodimer. NH4(+) serves as cofactor. K(+) is required as a cofactor.

It is found in the cytoplasm. It catalyses the reaction (R)-pantothenate + ATP = (R)-4'-phosphopantothenate + ADP + H(+). The protein operates within cofactor biosynthesis; coenzyme A biosynthesis; CoA from (R)-pantothenate: step 1/5. Functionally, catalyzes the phosphorylation of pantothenate (Pan), the first step in CoA biosynthesis. In Francisella tularensis subsp. holarctica (strain LVS), this protein is Type III pantothenate kinase 1.